The chain runs to 853 residues: Leucine--tRNA ligase (853 aa).

The short motif at 42 to 52 is the 'HIGH' region element; the sequence is PYPSGNLHMGH. Positions 615 to 619 match the 'KMSKS' region motif; it reads KMSKS. Lys618 provides a ligand contact to ATP.

Belongs to the class-I aminoacyl-tRNA synthetase family.

It is found in the cytoplasm. It catalyses the reaction tRNA(Leu) + L-leucine + ATP = L-leucyl-tRNA(Leu) + AMP + diphosphate. This is Leucine--tRNA ligase from Crocosphaera subtropica (strain ATCC 51142 / BH68) (Cyanothece sp. (strain ATCC 51142)).